Consider the following 496-residue polypeptide: Probable cytosol aminopeptidase (496 aa).

Positions 262 and 267 each coordinate Mn(2+). Residue K274 is part of the active site. Mn(2+)-binding residues include D285, D344, and E346. The active site involves R348.

It belongs to the peptidase M17 family. The cofactor is Mn(2+).

It is found in the cytoplasm. The catalysed reaction is Release of an N-terminal amino acid, Xaa-|-Yaa-, in which Xaa is preferably Leu, but may be other amino acids including Pro although not Arg or Lys, and Yaa may be Pro. Amino acid amides and methyl esters are also readily hydrolyzed, but rates on arylamides are exceedingly low.. It catalyses the reaction Release of an N-terminal amino acid, preferentially leucine, but not glutamic or aspartic acids.. Presumably involved in the processing and regular turnover of intracellular proteins. Catalyzes the removal of unsubstituted N-terminal amino acids from various peptides. The polypeptide is Probable cytosol aminopeptidase (Rhizobium johnstonii (strain DSM 114642 / LMG 32736 / 3841) (Rhizobium leguminosarum bv. viciae)).